The primary structure comprises 398 residues: S-adenosylmethionine synthase (398 aa).

Residue 136–141 (GTGSSD) coordinates ATP.

The protein belongs to the AdoMet synthase 2 family. The cofactor is Mg(2+).

It catalyses the reaction L-methionine + ATP + H2O = S-adenosyl-L-methionine + phosphate + diphosphate. Its pathway is amino-acid biosynthesis; S-adenosyl-L-methionine biosynthesis; S-adenosyl-L-methionine from L-methionine: step 1/1. Its function is as follows. Catalyzes the formation of S-adenosylmethionine from methionine and ATP. This is S-adenosylmethionine synthase from Methanosarcina mazei (strain ATCC BAA-159 / DSM 3647 / Goe1 / Go1 / JCM 11833 / OCM 88) (Methanosarcina frisia).